The following is a 92-amino-acid chain: Large ribosomal subunit protein eL37 (92 aa).

Cys-19, Cys-22, Cys-34, and Cys-37 together coordinate Zn(2+). A C4-type zinc finger spans residues 19–37; it reads CRRCGRSSYHIQKSKCAQC.

This sequence belongs to the eukaryotic ribosomal protein eL37 family. Zn(2+) serves as cofactor.

Functionally, binds to the 23S rRNA. The chain is Large ribosomal subunit protein eL37 (RpL37) from Spodoptera frugiperda (Fall armyworm).